The chain runs to 331 residues: Centriolar satellite-associated tubulin polyglutamylase complex regulator 1 (331 aa).

The segment at 1–111 is required for interaction with PCM1; it reads MLSPERLALP…HCLLQLLCPD (111 aa). The tract at residues 1-225 is required for interaction with TPGS1, LRRC49, and TTLL1; that stretch reads MLSPERLALP…SCPPPALVKE (225 aa). Positions 112-331 are required for interaction with TPGS2; it reads FPLELTQKAA…STEETDESET (220 aa). The tract at residues 288-331 is disordered; it reads SPEASCLPSRTPPRVGSPWRPLHHSRKVDGESDGSTEETDESET. Over residues 318 to 331 the composition is skewed to acidic residues; that stretch reads ESDGSTEETDESET. Residue Ser-319 is modified to Phosphoserine.

This sequence belongs to the CSTPP1 family. As to quaternary structure, interacts with PCM1. Interacts with TTLL1, TPGS1, TPGS2 and LRRC49; the interactions link CSTPP1 to the complex TPGC. Binds to alpha-tubulin.

It localises to the cytoplasm. Its subcellular location is the cytoskeleton. The protein localises to the microtubule organizing center. The protein resides in the centrosome. It is found in the centriolar satellite. Its function is as follows. Regulator of the tubulin polyglutamylase complex (TPGC) that controls cytoskeletal organization, nuclear shape, and cilium disassembly by balancing microtubule and actin assembly. Regulates the assembly and stability of the TPGC and thereby modulates polyglutamylation of the microtubule, which antagonizes MAP4 binding. The sequence is that of Centriolar satellite-associated tubulin polyglutamylase complex regulator 1 (CSTPP1) from Pongo abelii (Sumatran orangutan).